We begin with the raw amino-acid sequence, 432 residues long: Enolase 1 (432 aa).

Position 163 (glutamine 163) interacts with (2R)-2-phosphoglycerate. Glutamate 205 serves as the catalytic Proton donor. Residues aspartate 242, glutamate 287, and aspartate 314 each coordinate Mg(2+). Residues lysine 339, arginine 368, serine 369, and lysine 390 each contribute to the (2R)-2-phosphoglycerate site. The Proton acceptor role is filled by lysine 339.

The protein belongs to the enolase family. Mg(2+) is required as a cofactor.

The protein localises to the cytoplasm. Its subcellular location is the secreted. It is found in the cell surface. The catalysed reaction is (2R)-2-phosphoglycerate = phosphoenolpyruvate + H2O. The protein operates within carbohydrate degradation; glycolysis; pyruvate from D-glyceraldehyde 3-phosphate: step 4/5. Catalyzes the reversible conversion of 2-phosphoglycerate (2-PG) into phosphoenolpyruvate (PEP). It is essential for the degradation of carbohydrates via glycolysis. The chain is Enolase 1 from Lactobacillus johnsonii (strain CNCM I-12250 / La1 / NCC 533).